The sequence spans 197 residues: Transmembrane protein 126A (197 aa).

The Mitochondrial matrix portion of the chain corresponds to 1 to 35 (MENHEPDGTIIKENLTDIIARKINQLPEAERNLLE). A helical transmembrane segment spans residues 36–56 (NGSTYVGLNAALCGLIANSLF). The Mitochondrial intermembrane segment spans residues 57 to 58 (RR). The helical transmembrane segment at 59-79 (ILHVTQARIAAGLPMAVIPFL) threads the bilayer. Residues 80–107 (TANVSYKGFVSLPLNTGDLQCETCTVTR) are Mitochondrial matrix-facing. A helical transmembrane segment spans residues 108 to 128 (GGLVGLVFGGLYPVFLAIPVN). Residues 129–160 (GGLAARYNSALLPEKGNILNYWIRISKPVFRK) are Mitochondrial intermembrane-facing. The chain crosses the membrane as a helical span at residues 161–177 (MLFPILLQTGFAAYLGS). Topologically, residues 178–197 (RQYKLLIKALQLPEPGLEIE) are mitochondrial matrix.

This sequence belongs to the TMEM126 family. In terms of assembly, interacts with OXA1L; promoting cotranslational quality control in mitochondria.

The protein localises to the mitochondrion inner membrane. Its function is as follows. Protein required for the cotranslational protein quality control in the inner membrane of the mitochondria. Associates with newly synthesized polypeptides and may act as a chaperone that cooperates with OXA1L for the insertion of newly synthesized mitochondrial proteins into the inner membrane. Required for the assembly of the ND4 module of mitochondrial complex I. The protein is Transmembrane protein 126A (TMEM126A) of Bos taurus (Bovine).